A 359-amino-acid chain; its full sequence is S-geranylgeranyl-glutathione receptor P2RY8 (359 aa).

Residues 1–19 lie on the Extracellular side of the membrane; the sequence is MQVPNSTGPDNATLQMLRN. N-linked (GlcNAc...) asparagine glycosylation is found at N5 and N11. A helical membrane pass occupies residues 20–40; it reads PAIAVALPVVYSLVAAVSIPG. The Cytoplasmic segment spans residues 41–57; that stretch reads NLFSLWVLCRRMGPRSP. Residues 58–78 form a helical membrane-spanning segment; it reads SVIFMINLSVTDLMLASVLPF. Over 79 to 88 the chain is Extracellular; that stretch reads QIYYHCNRHH. A helical transmembrane segment spans residues 89–109; that stretch reads WVFGVLLCNVVTVAFYANMYS. At 110–138 the chain is on the cytoplasmic side; sequence SILTMTCISVERFLGVLYPLSSKRWRRRR. Residues 139–159 traverse the membrane as a helical segment; that stretch reads YAVAACAGTWLLLLTALSPLA. The Extracellular portion of the chain corresponds to 160-187; the sequence is RTDLTYPVHALGIITCFDVLKWTMLPSV. Residues 188-208 form a helical membrane-spanning segment; the sequence is AMWAVFLFTIFILLFLIPFVI. At 209 to 237 the chain is on the cytoplasmic side; the sequence is TVACYTATILKLLRTEEAHGREQRRRAVG. Residues 238-258 traverse the membrane as a helical segment; it reads LAAVVLLAFVTCFAPNNFVLL. Topologically, residues 259-275 are extracellular; that stretch reads AHIVSRLFYGKSYYHVY. Residues 276–296 traverse the membrane as a helical segment; sequence KLTLCLSCLNNCLDPFVYYFA. Residues 297–359 are Cytoplasmic-facing; sequence SREFQLRLRE…PGLQRQESVF (63 aa). Residues 329–359 are disordered; that stretch reads RTTSVRSEAGAHPEGMEGATRPGLQRQESVF.

This sequence belongs to the G-protein coupled receptor 1 family. In terms of tissue distribution, barely detectable in normal blood leukocytes. Weaker expression was seen in heart, kidney and lung. Not detected in brain. Expressed in B cells and follicular helper T cells in germinal centers (at protein level).

Its subcellular location is the cell membrane. Its function is as follows. G protein-coupled receptor for S-geranylgeranyl-glutathione (GGG), an endogenous metabolite present in lymphoid tissues. Couples the binding of GGG to the activation of GNA13 and downstream repression of AKT activation in lymphocytes defining their positioning and growth within lymphoid organs. In lymphoid follicles, confines B cells and follicular helper T cells in germinal centers (GCs) in response to GGG local gradients established by GGT5 (via GGG catabolism) and ABCC1 (via extracellular transport) with lower concentrations of GGG found in the follicular dendritic cell network region around which germinal centers are formed. In the bone marrow, also in response to GGG gradients established by GGT5 and ABCC1, it restricts chemotactic transmigration of B cells, T cells and NK cells from blood vessels to the bone marrow parenchyma. Contributes to GNA13-dependent pathway that suppresses GC B cell growth. In Homo sapiens (Human), this protein is S-geranylgeranyl-glutathione receptor P2RY8.